A 192-amino-acid polypeptide reads, in one-letter code: MYVVFEGIDCVGKSTQISLLKEIYKDAIFTLEPGGTELGKHLREILLNKTHPISKRAELLLFLADRAQHFEEILKTNQNKLIISDRSFISGMAYAKDFENDLLFALNSFALENFFPQKIIFLKGDANLIQERLSQKELDSIEKRGIEYFLSVQDKLEKVLHFLKEKISIEILTLDAKESKEKLHQQIKEFLQ.

7 to 14 (GIDCVGKS) contacts ATP.

The protein belongs to the thymidylate kinase family.

The catalysed reaction is dTMP + ATP = dTDP + ADP. Phosphorylation of dTMP to form dTDP in both de novo and salvage pathways of dTTP synthesis. This chain is Thymidylate kinase, found in Campylobacter jejuni subsp. jejuni serotype O:6 (strain 81116 / NCTC 11828).